We begin with the raw amino-acid sequence, 263 residues long: uncharacterized protein (263 aa).

13-20 contacts NADP(+); that stretch reads TGSTSGIG. Serine 141 provides a ligand contact to substrate. Tyrosine 154 (proton acceptor) is an active-site residue.

The protein belongs to the short-chain dehydrogenases/reductases (SDR) family.

This is an uncharacterized protein from Bacillus subtilis (strain 168).